Consider the following 368-residue polypeptide: tRNA(Met) cytidine acetate ligase (368 aa).

ATP-binding positions include 7-20 (IAEF…HKYL), Gly96, Asn152, and Arg175.

It belongs to the TmcAL family.

It is found in the cytoplasm. It carries out the reaction cytidine(34) in elongator tRNA(Met) + acetate + ATP = N(4)-acetylcytidine(34) in elongator tRNA(Met) + AMP + diphosphate. In terms of biological role, catalyzes the formation of N(4)-acetylcytidine (ac(4)C) at the wobble position of elongator tRNA(Met), using acetate and ATP as substrates. First activates an acetate ion to form acetyladenylate (Ac-AMP) and then transfers the acetyl group to tRNA to form ac(4)C34. The chain is tRNA(Met) cytidine acetate ligase from Streptococcus pyogenes serotype M49 (strain NZ131).